The primary structure comprises 496 residues: Glycerol kinase (496 aa).

An ADP-binding site is contributed by threonine 12. 3 residues coordinate ATP: threonine 12, threonine 13, and serine 14. Threonine 12 serves as a coordination point for sn-glycerol 3-phosphate. An ADP-binding site is contributed by arginine 16. Sn-glycerol 3-phosphate is bound by residues arginine 82, glutamate 83, and tyrosine 134. Positions 82, 83, and 134 each coordinate glycerol. Position 230 is a phosphohistidine; by HPr (histidine 230). Aspartate 244 contacts sn-glycerol 3-phosphate. The glycerol site is built by aspartate 244 and glutamine 245. Positions 266 and 309 each coordinate ADP. Residues threonine 266, glycine 309, glutamine 313, and glycine 410 each coordinate ATP. ADP is bound by residues glycine 410 and asparagine 414.

Belongs to the FGGY kinase family. Homotetramer and homodimer (in equilibrium). Post-translationally, the phosphoenolpyruvate-dependent sugar phosphotransferase system (PTS), including enzyme I, and histidine-containing protein (HPr) are required for the phosphorylation, which leads to the activation of the enzyme.

It carries out the reaction glycerol + ATP = sn-glycerol 3-phosphate + ADP + H(+). The protein operates within polyol metabolism; glycerol degradation via glycerol kinase pathway; sn-glycerol 3-phosphate from glycerol: step 1/1. Its activity is regulated as follows. Activated by phosphorylation and inhibited by fructose 1,6-bisphosphate (FBP). Key enzyme in the regulation of glycerol uptake and metabolism. Catalyzes the phosphorylation of glycerol to yield sn-glycerol 3-phosphate. This Bacillus thuringiensis subsp. konkukian (strain 97-27) protein is Glycerol kinase.